The primary structure comprises 414 residues: ORC1-type DNA replication protein 1 (414 aa).

ATP contacts are provided by residues 70–74 (TGKTA), Tyr-213, and Arg-225.

The protein belongs to the CDC6/cdc18 family.

In terms of biological role, involved in regulation of DNA replication. The protein is ORC1-type DNA replication protein 1 (cdc6-1) of Methanosarcina mazei (strain ATCC BAA-159 / DSM 3647 / Goe1 / Go1 / JCM 11833 / OCM 88) (Methanosarcina frisia).